Here is a 308-residue protein sequence, read N- to C-terminus: Glycine betaine uptake system ATP-binding protein YehX (308 aa).

In terms of domain architecture, ABC transporter spans 2 to 235 (IEFSHVSKLF…PANDFVRQFF (234 aa)). 34 to 41 (GTSGSGKS) lines the ATP pocket.

The protein belongs to the ABC transporter superfamily. As to quaternary structure, the complex is composed of two ATP-binding proteins (YehX), two transmembrane proteins (YehW and YehY) and a solute-binding protein (YehZ).

It carries out the reaction glycine betaine(out) + ATP + H2O = glycine betaine(in) + ADP + phosphate + H(+). Functionally, part of an ABC transporter complex involved in low-affinity glycine betaine uptake. Probably responsible for energy coupling to the transport system. This is Glycine betaine uptake system ATP-binding protein YehX (yehX) from Escherichia coli (strain K12).